A 290-amino-acid polypeptide reads, in one-letter code: MADSKLLAPELSDAESMGEETVRFQELLLKASKELQQAQTARPESTQIQPKPGFCIKTNSSEGKVFINICHSPSIPPPVDVTEDELLQMLEEDQAGFRIPMSLGEPHAELDAKGQGCTAYDVAVNSNFYLRMQNSDFLRELVVTIAREGLEDKYGLQLNPEWRMLKYRSFLGSISQQSIRSQQRPRIQELGTLDTHDSLGTRHGPERPHLNLWLEAPDLLLAEVDLPKLDGAQGLALEIGENRLVVGGPQQLYHLDACIPLRINSEASRAAFHHRRKQLMVSMPLLSASS.

Phosphoserine is present on residues Ser-12, Ser-16, and Ser-173.

Belongs to the PIH1 family. Component of the R2TP complex composed at least of RUVBL1, RUVBL2, RPAP3 and PIHD1. Component of the PAQosome complex which is responsible for the biogenesis of several protein complexes and which consists of R2TP complex members RUVBL1, RUVBL2, RPAP3 and PIH1D1, URI complex members PFDN2, PFDN6, PDRG1, UXT and URI1 as well as ASDURF, POLR2E and DNAAF10/WDR92. Interacts with phosphorylated TELO2 and mediates interaction of TELO2 with the R2TP complex. Interacts with phosphorylated ECD, EFTUD2/SNRP116, RPB1 and UBR5 and with RPB1 in a phosphorylation-independent manner. Interacts with the core C/D box snoRNP particle components NOP58 and FBL and with RUVBL1/TIP49. Interacts with RPAP3 and DNAAF10. Interacts with histone H4 and with SWI/SNF complex member SMARCB1/SNF5. Interacts with the mTORC1 complex member RPTOR. Interacts with MSL1.

It is found in the nucleus. Its function is as follows. Involved in the assembly of C/D box small nucleolar ribonucleoprotein (snoRNP) particles. Recruits the SWI/SNF complex to the core promoter of rRNA genes and enhances pre-rRNA transcription. Mediates interaction of TELO2 with the R2TP complex which is necessary for the stability of MTOR and SMG1. Positively regulates the assembly and activity of the mTORC1 complex. This Rattus norvegicus (Rat) protein is PIH1 domain-containing protein 1 (Pih1d1).